The sequence spans 173 residues: RNA pyrophosphohydrolase (173 aa).

The Nudix hydrolase domain maps to 11–164 (PYRRSVGILV…KKHVYMKIVN (154 aa)). Positions 52 to 73 (GGIDENEEPLDAARRELYEETG) match the Nudix box motif.

This sequence belongs to the Nudix hydrolase family. RppH subfamily. A divalent metal cation is required as a cofactor.

Functionally, accelerates the degradation of transcripts by removing pyrophosphate from the 5'-end of triphosphorylated RNA, leading to a more labile monophosphorylated state that can stimulate subsequent ribonuclease cleavage. The chain is RNA pyrophosphohydrolase from Bartonella henselae (strain ATCC 49882 / DSM 28221 / CCUG 30454 / Houston 1) (Rochalimaea henselae).